Reading from the N-terminus, the 501-residue chain is Lysine--tRNA ligase (501 aa).

Mg(2+) is bound by residues Glu402 and Glu409.

It belongs to the class-II aminoacyl-tRNA synthetase family. As to quaternary structure, homodimer. Mg(2+) is required as a cofactor.

It is found in the cytoplasm. The catalysed reaction is tRNA(Lys) + L-lysine + ATP = L-lysyl-tRNA(Lys) + AMP + diphosphate. The sequence is that of Lysine--tRNA ligase from Helicobacter pylori (strain Shi470).